A 49-amino-acid chain; its full sequence is uncharacterized protein (49 aa).

The helical transmembrane segment at 22–42 (AIVGISIMIIIAIGIYLIIEY) threads the bilayer.

It is found in the membrane. This is an uncharacterized protein from Methanocaldococcus jannaschii (strain ATCC 43067 / DSM 2661 / JAL-1 / JCM 10045 / NBRC 100440) (Methanococcus jannaschii).